Here is a 332-residue protein sequence, read N- to C-terminus: Beta-ketoacyl-[acyl-carrier-protein] synthase III 2 (332 aa).

Catalysis depends on residues Cys-115 and His-252. The tract at residues 253 to 257 (SANLR) is ACP-binding. Asn-282 is an active-site residue.

The protein belongs to the thiolase-like superfamily. FabH family. As to quaternary structure, homodimer.

It is found in the cytoplasm. The enzyme catalyses malonyl-[ACP] + acetyl-CoA + H(+) = 3-oxobutanoyl-[ACP] + CO2 + CoA. It participates in lipid metabolism; fatty acid biosynthesis. In terms of biological role, catalyzes the condensation reaction of fatty acid synthesis by the addition to an acyl acceptor of two carbons from malonyl-ACP. Catalyzes the first condensation reaction which initiates fatty acid synthesis and may therefore play a role in governing the total rate of fatty acid production. Possesses both acetoacetyl-ACP synthase and acetyl transacylase activities. Its substrate specificity determines the biosynthesis of branched-chain and/or straight-chain of fatty acids. In Halalkalibacterium halodurans (strain ATCC BAA-125 / DSM 18197 / FERM 7344 / JCM 9153 / C-125) (Bacillus halodurans), this protein is Beta-ketoacyl-[acyl-carrier-protein] synthase III 2.